We begin with the raw amino-acid sequence, 804 residues long: Exo-1,4-beta-xylosidase xlnD (804 aa).

The signal sequence occupies residues Met1–Ala26. Asn29, Asn124, Asn148, Asn242, and Asn251 each carry an N-linked (GlcNAc...) asparagine glycan. The active site involves Asp315. N-linked (GlcNAc...) asparagine glycans are attached at residues Asn357, Asn390, Asn413, Asn444, Asn455, Asn573, Asn665, Asn696, and Asn718.

It belongs to the glycosyl hydrolase 3 family.

Its subcellular location is the secreted. The enzyme catalyses Hydrolysis of (1-&gt;4)-beta-D-xylans, to remove successive D-xylose residues from the non-reducing termini.. It functions in the pathway glycan degradation; xylan degradation. In terms of biological role, xylan 1,4-beta-xylosidase involved in the hydrolysis of xylan, a major structural heterogeneous polysaccharide found in plant biomass representing the second most abundant polysaccharide in the biosphere, after cellulose. This Aspergillus awamori (Black koji mold) protein is Exo-1,4-beta-xylosidase xlnD (xlnD).